The chain runs to 598 residues: Aspartate--tRNA ligase (598 aa).

An L-aspartate-binding site is contributed by E182. The interval 206-209 (QLFK) is aspartate. R228 lines the L-aspartate pocket. ATP contacts are provided by residues 228–230 (RDE) and Q237. H456 contacts L-aspartate. E490 serves as a coordination point for ATP. R497 contributes to the L-aspartate binding site. 542–545 (GVDR) provides a ligand contact to ATP.

The protein belongs to the class-II aminoacyl-tRNA synthetase family. Type 1 subfamily. In terms of assembly, homodimer.

It localises to the cytoplasm. The enzyme catalyses tRNA(Asp) + L-aspartate + ATP = L-aspartyl-tRNA(Asp) + AMP + diphosphate. Catalyzes the attachment of L-aspartate to tRNA(Asp) in a two-step reaction: L-aspartate is first activated by ATP to form Asp-AMP and then transferred to the acceptor end of tRNA(Asp). The chain is Aspartate--tRNA ligase from Agathobacter rectalis (strain ATCC 33656 / DSM 3377 / JCM 17463 / KCTC 5835 / VPI 0990) (Eubacterium rectale).